The sequence spans 66 residues: Scarabaecin (66 aa).

Residues 1–26 (MKTLTFYTLLLCAALYSNFFDCKAVA) form the signal peptide. The cysteines at positions 46 and 57 are disulfide-linked.

It localises to the secreted. Its function is as follows. Possesses antifungal activity against phytopathogenic fungi such as P.oryzae, R.solani and B.cinerea but not against phytopathogenic bacteria. Shows weak activity against the insect pathogenic fungus B.bassiana and against S.aureus. Binds chitin. The polypeptide is Scarabaecin (Oryctes rhinoceros (Coconut rhinoceros beetle)).